Consider the following 167-residue polypeptide: Novel acetylcholine receptor chaperone (167 aa).

The Cytoplasmic segment spans residues 1-5 (MASPR). Residues 6-26 (TVTIVALSVALGLFFVFMGTI) form a helical membrane-spanning segment. Over 27 to 61 (KLTPRLSKDAYSEMKRAYKSYVRALPLLKKMGINS) the chain is Lumenal. Positions 43-54 (AYKSYVRALPLL) are interaction with NGFR. Residues 62 to 82 (ILLRKSIGALEVACGIVMTLV) form a helical membrane-spanning segment. Residues 83-88 (PGRPKD) lie on the Cytoplasmic side of the membrane. A helical transmembrane segment spans residues 89 to 109 (VANFFLLLLVLAVLFFHQLVG). Residues 110–114 (DPLKR) lie on the Lumenal side of the membrane. The chain crosses the membrane as a helical span at residues 115 to 132 (YAHALVFGILLTCRLLIA). The Cytoplasmic segment spans residues 133-167 (RKPEDRSSEKKPLPGNAEEQPSLYEKAPQGKVKVS). The segment at 136–167 (EDRSSEKKPLPGNAEEQPSLYEKAPQGKVKVS) is disordered.

This sequence belongs to the DoxX family. In terms of assembly, may interact with NGFR. Interacts with RPN1, RPN2 and CANX.

Its subcellular location is the peroxisome membrane. The protein localises to the cytoplasmic vesicle. The protein resides in the endoplasmic reticulum membrane. Functionally, molecular chaperone which mediates the proper assembly and functional expression of the nicotinic acetylcholine receptors (nAChRs) throughout the brain. Essential for the proper folding, assembly, function and surface trafficking of alpha-7 (CHRNA7), alpha-4-beta-2, alpha-3-beta-2 and alpha-3-beta-4 receptors. Stably associates with ribophorin-1 (RPN1) and ribophorin-2 (RPN2) (components of the oligosaccharyl transferase (OST) complex) and with calnexin (CANX), both of which are critical for NACHO-mediated effects on CHRNA7 assembly and function. Facilitates the proper folding and assembly of alpha-6-beta-2 and alpha-6-beta-2-beta-3 receptors and acts at early stages of the nAChRs subunit assembly. Promotes the expression of the alpha-4(2):beta-2(3) stoichiometric form over the alpha-4(3):beta-2(2) form. In Macaca fascicularis (Crab-eating macaque), this protein is Novel acetylcholine receptor chaperone (TMEM35A).